Here is a 120-residue protein sequence, read N- to C-terminus: Chaperonin GroEL (120 aa).

Position 23–27 (23–27 (DGTTT)) interacts with ATP.

It belongs to the chaperonin (HSP60) family. As to quaternary structure, forms a cylinder of 14 subunits composed of two heptameric rings stacked back-to-back. Interacts with the co-chaperonin GroES.

It localises to the cytoplasm. It catalyses the reaction ATP + H2O + a folded polypeptide = ADP + phosphate + an unfolded polypeptide.. Its function is as follows. Together with its co-chaperonin GroES, plays an essential role in assisting protein folding. The GroEL-GroES system forms a nano-cage that allows encapsulation of the non-native substrate proteins and provides a physical environment optimized to promote and accelerate protein folding. The chain is Chaperonin GroEL from Mycobacterium gordonae.